We begin with the raw amino-acid sequence, 428 residues long: Glutamate-1-semialdehyde 2,1-aminomutase (428 aa).

N6-(pyridoxal phosphate)lysine is present on lysine 267.

It belongs to the class-III pyridoxal-phosphate-dependent aminotransferase family. HemL subfamily. In terms of assembly, homodimer. It depends on pyridoxal 5'-phosphate as a cofactor.

It localises to the cytoplasm. It catalyses the reaction (S)-4-amino-5-oxopentanoate = 5-aminolevulinate. It participates in porphyrin-containing compound metabolism; protoporphyrin-IX biosynthesis; 5-aminolevulinate from L-glutamyl-tRNA(Glu): step 2/2. The sequence is that of Glutamate-1-semialdehyde 2,1-aminomutase from Sulfurihydrogenibium sp. (strain YO3AOP1).